The primary structure comprises 3767 residues: Transmembrane cell adhesion receptor mua-3 (3767 aa).

Positions 1-24 (MQAGISIFFLFLHIPIFFVNCSNS) are cleaved as a signal peptide. Topologically, residues 25–3417 (TSCVAREEFQ…CQVAPSNASL (3393 aa)) are extracellular. Residues 26 to 63 (SCVAREEFQCKMDDSCISMKKWQDGVDDCYDGSDEVCL) enclose the LDL-receptor class A 1 domain. 10 disulfides stabilise this stretch: C27/C41, C35/C54, C62/C76, C69/C89, C97/C110, C104/C123, C131/C144, C138/C157, C165/C179, and C172/C192. LDL-receptor class A domains lie at 96–132 (GCPA…EPCA), 133–166 (QNQF…EECT), and 167–209 (TSQF…ANCT). N-linked (GlcNAc...) asparagine glycosylation is found at N201 and N207. 17 EGF-like domains span residues 225–268 (KLKF…DKCI), 375–416 (NRDD…GTCR), 418–466 (LIDE…RKCR), 468–517 (LINE…RNCT), 519–566 (AINE…RKCV), 614–663 (RANP…RKCV), 665–713 (AVDE…RSCK), 714–760 (KADM…RVCR), 762–810 (VVNE…KNCV), 816–860 (DPPE…GRCV), 861–908 (VINE…RICR), 910–961 (RVNE…RRCI), 963–1012 (AVNE…RICT), 1029–1070 (TDDG…GSCR), 1071–1118 (VYSA…RICK), 1120–1168 (LINE…RQCT), and 1170–1219 (SNNE…RVCT). Disulfide bonds link C229–C243, C235–C252, C254–C267, C381–C392, C386–C402, C404–C415, C422–C435, C429–C444, C446–C465, C472–C486, C480–C495, C497–C516, C523–C536, C530–C545, C547–C565, C618–C632, C626–C642, C644–C662, C669–C682, C676–C691, C693–C712, C718–C729, C723–C738, C740–C759, C766–C779, C773–C788, C790–C809, C820–C836, C828–C845, C847–C859, C865–C879, C873–C888, C890–C907, C914–C930, C924–C939, C941–C960, C967–C981, C975–C990, C992–C1011, C1033–C1046, C1040–C1055, C1057–C1069, C1075–C1087, C1081–C1096, C1098–C1117, C1124–C1137, C1131–C1146, C1148–C1167, C1174–C1188, C1182–C1197, and C1199–C1218. N383 carries N-linked (GlcNAc...) asparagine glycosylation. A glycan (N-linked (GlcNAc...) asparagine) is linked at N515. A VWFA domain is found at 1230–1406 (DLVFLIDGSG…DLDTRLRSMI (177 aa)). Residue N1350 is glycosylated (N-linked (GlcNAc...) asparagine). EGF-like domains lie at 1421-1466 (SEDV…RVCG), 1466-1510 (GGDL…GFCV), 1521-1562 (HDAN…GQCA), 1563-1608 (YPGS…DICL), 1608-1656 (LKNE…RVCV), 1658-1706 (LQNE…MVCK), 1708-1755 (LVNE…RRCE), 1759-1807 (TNDK…RLCI), 1809-1860 (VIPE…RLCK), 1862-1911 (LQNE…RKCK), 1913-1961 (LINE…RRCL), 1963-2011 (RINE…RICR), 2014-2062 (LVDE…RLCQ), 2068-2112 (PPPE…GSCS), 2113-2160 (IINE…RMCK), 2162-2208 (MVNE…RICK), 2210-2258 (LTNE…RACR), 2260-2308 (LVNE…RVCL), 2310-2358 (FINE…RVCV), 2360-2408 (LVDE…RVCS), 2409-2455 (APEV…RVCV), 2456-2504 (RNNA…RVCE), 2513-2563 (PRHP…RLCV), 2565-2616 (TEPV…RICK), 2618-2666 (LINE…RICS), 2668-2714 (SVNE…HRCS), 2716-2763 (MINE…RICR), 2763-2811 (RLNE…RICI), and 2833-2872 (REFP…GKCQ). Intrachain disulfides connect C1425–C1441, C1433–C1450, C1452–C1465, C1470–C1484, C1478–C1494, C1496–C1509, C1525–C1538, C1532–C1547, C1549–C1561, C1567–C1583, C1575–C1592, C1594–C1607, C1612–C1625, C1619–C1634, C1636–C1655, C1662–C1675, C1669–C1684, C1686–C1705, C1712–C1726, C1720–C1735, C1737–C1754, C1763–C1776, C1770–C1786, C1788–C1806, C1813–C1829, C1821–C1838, C1840–C1859, C1866–C1880, C1873–C1889, C1891–C1910, C1917–C1930, C1924–C1939, C1941–C1960, C1967–C1980, C1974–C1989, C1991–C2010, C2018–C2031, C2025–C2040, C2042–C2061, C2072–C2088, C2080–C2097, C2099–C2111, C2117–C2131, C2125–C2140, C2142–C2159, C2166–C2180, C2174–C2189, C2191–C2207, C2214–C2228, C2222–C2237, C2239–C2257, C2264–C2278, C2272–C2287, C2289–C2307, C2314–C2327, C2321–C2336, C2338–C2357, C2364–C2377, C2371–C2386, C2388–C2407, C2413–C2425, C2419–C2435, C2437–C2454, C2460–C2474, C2468–C2483, and C2485–C2503. Residues 2492–2521 (RSPDSSQRGRVCEPPPPPSPPPRHPCQDPE) are disordered. Positions 2504–2515 (EPPPPPSPPPRH) are enriched in pro residues. 21 disulfides stabilise this stretch: C2517–C2531, C2525–C2541, C2543–C2562, C2569–C2583, C2577–C2594, C2596–C2615, C2622–C2636, C2630–C2645, C2647–C2665, C2672–C2686, C2680–C2695, C2697–C2713, C2720–C2734, C2728–C2743, C2745–C2762, C2767–C2781, C2775–C2790, C2792–C2810, C2837–C2850, C2842–C2856, and C2858–C2871. The region spanning 2873 to 2999 (EVQETPFELR…GSLRVASDTD (127 aa)) is the SEA 1 domain. The N-linked (GlcNAc...) asparagine glycan is linked to N2944. Residues 3009 to 3048 (EWGNCGGMSCKEHLKEVCIAGHICGCPDGMKRRDANSECR) enclose the EGF-like 47 domain. Cystine bridges form between C3013–C3026, C3018–C3032, and C3034–C3047. The SEA 2 domain occupies 3049-3174 (VVESWNVPLW…SELYLNPTQP (126 aa)). N-linked (GlcNAc...) asparagine glycans are attached at residues N3120 and N3130. 3 consecutive EGF-like domains span residues 3176 to 3220 (PFNP…KKCL), 3224 to 3272 (GFNE…SLCV), and 3272 to 3324 (VLDY…TLCM). Intrachain disulfides connect C3180–C3191, C3185–C3201, C3203–C3219, C3228–C3242, C3236–C3251, C3253–C3271, C3276–C3288, C3282–C3297, C3299–C3323, C3332–C3345, C3339–C3354, C3356–C3372, C3377–C3386, C3380–C3397, and C3399–C3408. N-linked (GlcNAc...) asparagine glycosylation occurs at N3285. In terms of domain architecture, EGF-like 51; calcium-binding spans 3328-3373 (DVDECALGLNNCSGVAHCIDRAVGYTCKCPDGYIDGNPDEPGRVCG). The N-linked (GlcNAc...) asparagine; atypical glycan is linked to N3337. N-linked (GlcNAc...) asparagine glycosylation occurs at N3338. The region spanning 3373 to 3409 (GALLCDLCNAHGDCVHNTATNNITCVCTDGWTGPQCQ) is the EGF-like 52 domain. The N-linked (GlcNAc...) asparagine glycan is linked to N3394. N3414 is a glycosylation site (N-linked (GlcNAc...) asparagine). The chain crosses the membrane as a helical span at residues 3418 to 3438 (VLLILLALLFLLLTLCCLLYF). Residues 3439-3767 (CTKCHCFKGR…SQTSTHVTKK (329 aa)) lie on the Cytoplasmic side of the membrane. The segment at 3582–3729 (TTTTDEQGNT…EEDVEHSVGD (148 aa)) is disordered. Polar residues predominate over residues 3588–3597 (QGNTIVTTTE). Residues 3630–3665 (QSQSQQQQSMSQGMSQSMSQHATSAGYSSSGMESSA) are compositionally biased toward low complexity. Positions 3675–3684 (HTGERERGGS) are enriched in basic and acidic residues. Positions 3690–3702 (IGRARGMAAASSG) are enriched in low complexity.

As to expression, expressed in the hypodermis at the sites of muscle contact, in striated muscles including body wall muscles, the anal sphincter muscles and the junctions between the anal sphincter muscle and rectal cuticle. Also expressed in non-muscle cells including the excretory duct cell and pore cells.

The protein localises to the cell membrane. It localises to the cell junction. The protein resides in the hemidesmosome. In terms of biological role, involved in cell adhesion and required for organ positioning and attachment. At the hypodermal surface, required for attachment of the hypdermermis to the basal cuticle in postembryonic development, possibly through intermediate filaments of the cytoskeleton. This Caenorhabditis elegans protein is Transmembrane cell adhesion receptor mua-3.